Here is a 1019-residue protein sequence, read N- to C-terminus: StAR-related lipid transfer protein 8 (1019 aa).

Disordered regions lie at residues 92–122 and 134–154; these read QPLL…KVKK and SLRR…CLAT. A compositionally biased stretch (polar residues) spans 100–115; that stretch reads SPSNQPFLSPPQGQEG. Ser-108 bears the Phosphoserine mark. Over residues 134–147 the composition is skewed to basic and acidic residues; the sequence is SLRRKEKGDSRQTE. Arg-168 bears the Asymmetric dimethylarginine mark. Ser-234 and Ser-237 each carry phosphoserine. Disordered regions lie at residues 325 to 355 and 406 to 482; these read MYPD…EVAT and APAQ…VGAS. The segment covering 334 to 347 has biased composition (acidic residues); that stretch reads KEEEEEEEEEEEEA. 2 stretches are compositionally biased toward polar residues: residues 418-430 and 437-455; these read NSTA…SSLS and ISDT…NSMN. A phosphoserine mark is found at Ser-494 and Ser-502. The 205-residue stretch at 569-773 folds into the Rho-GAP domain; sequence PPLIHVQRTG…HMISDCKKLF (205 aa). The segment at 731 to 754 is disordered; sequence DSSSPRIKSKRSLVGRPGPRDLSE. The region spanning 805 to 1013 is the START domain; that stretch reads AQAAGVSLSL…RDSFPTLQAA (209 aa).

As to quaternary structure, binds both the SH2 and PTB domains of TNS1.

The protein resides in the cell junction. It localises to the focal adhesion. In terms of biological role, accelerates GTPase activity of RHOA and CDC42, but not RAC1. Stimulates the hydrolysis of phosphatidylinositol 4,5-bisphosphate by PLCD1. The polypeptide is StAR-related lipid transfer protein 8 (Stard8) (Mus musculus (Mouse)).